We begin with the raw amino-acid sequence, 130 residues long: Large ribosomal subunit protein bL20 (130 aa).

The protein belongs to the bacterial ribosomal protein bL20 family.

Functionally, binds directly to 23S ribosomal RNA and is necessary for the in vitro assembly process of the 50S ribosomal subunit. It is not involved in the protein synthesizing functions of that subunit. In Nocardioides sp. (strain ATCC BAA-499 / JS614), this protein is Large ribosomal subunit protein bL20.